A 1576-amino-acid chain; its full sequence is Proton channel OtopLc (1576 aa).

Disordered regions lie at residues 1–602 (MDSS…SSPP) and 621–736 (QIGS…SSPV). Low complexity-rich tracts occupy residues 58–67 (SLAEEVLLLV) and 76–85 (LLGQPLPTLT). Acidic residues-rich tracts occupy residues 103–116 (DEGD…EPVP), 159–171 (DDGE…DAEE), 186–198 (SNPD…EEQE), and 206–216 (PKEEDEEEDDD). Over residues 219-228 (TPPPPLPPLP) the composition is skewed to pro residues. Over residues 229–241 (SNFSYVQGHNLGQ) the composition is skewed to polar residues. Asn-230 carries N-linked (GlcNAc...) asparagine glycosylation. The span at 243 to 252 (TPPLTKSPSN) shows a compositional bias: low complexity. Residues 253 to 264 (SPSPPVTPPPCP) are compositionally biased toward pro residues. The N-linked (GlcNAc...) asparagine glycan is linked to Asn-267. Positions 316 to 341 (DQPEPEDQPPEPENEPEPEPEPEPEP) are enriched in acidic residues. Residues 347–356 (AREDYSRSLD) are compositionally biased toward basic and acidic residues. The segment covering 362 to 376 (TTITTPPSNGYSASS) has biased composition (polar residues). Residues 384–393 (HFAELDEDRG) are compositionally biased toward basic and acidic residues. The span at 402–419 (QEPEEEVEEEEEEEEEEL) shows a compositional bias: acidic residues. Basic and acidic residues predominate over residues 420–433 (TKETDEISVDRESL). Residues 434–457 (QDQGGDSISSPRPASILTGSISTS) are compositionally biased toward polar residues. Over residues 465-507 (SPKPESRGPSRSGSQRSQLRSGSQQGSIAESRGGSRIGSRTGS) the composition is skewed to low complexity. Polar residues-rich tracts occupy residues 519–534 (PQAS…SQGQ) and 545–555 (KSGSQRMQSPQ). A compositionally biased stretch (pro residues) spans 563-575 (MPSPPLMRSPPPE). The span at 661-685 (AAAAPAVTTTAATTAVTSQPRSHFT) shows a compositional bias: low complexity. The span at 686–709 (SSHHHYHLPHQFQHPHHQNHHTHS) shows a compositional bias: basic residues. A helical membrane pass occupies residues 741-761 (LFMAGVAPPIAAGAGSLMAMP). The interval 771–845 (GRVSARSGSQ…GSSSQPALSG (75 aa)) is disordered. The segment covering 776 to 799 (RSGSQHHVTIDESSLPSHKGNIQE) has biased composition (polar residues). Residues 826–839 (DSSDPPSSPGGSSS) show a composition bias toward low complexity. 2 helical membrane passes run 891–911 (ALAT…GIAF) and 931–951 (LYLY…LIWG). The span at 962 to 973 (PSKSATKASGTD) shows a compositional bias: polar residues. The interval 962 to 1001 (PSKSATKASGTDSMDESDTDSNSVHHRLPPPIPVRRPSLL) is disordered. Transmembrane regions (helical) follow at residues 1019–1039 (GAVA…GQYF), 1051–1071 (LLAL…YFIF), and 1084–1104 (IIAR…WLNV). An N-linked (GlcNAc...) asparagine glycan is attached at Asn-1121. The next 7 helical transmembrane spans lie at 1179–1199 (FLFP…YVMW), 1239–1259 (FVGI…FVLI), 1272–1292 (VTIC…VGMI), 1310–1330 (ILLV…VIAG), 1340–1360 (LVPI…MFIL), 1381–1401 (IVTF…LEKS), and 1412–1432 (FYGL…AIFY). An N-linked (GlcNAc...) asparagine glycan is attached at Asn-1479. The segment at 1498–1549 (EEVDSGESNSAEDAGAGAGSGGSRGSGGGAGAAEAGEAGEEGQQGGDSSCGL) is disordered. Residues 1503–1512 (GESNSAEDAG) are compositionally biased toward low complexity. A compositionally biased stretch (gly residues) spans 1513–1528 (AGAGSGGSRGSGGGAG).

The protein belongs to the otopetrin family.

The protein resides in the cell membrane. Functionally, proton-selective channel that specifically transports protons into cells. Proton-selective channel activity is probably required in cell types that use changes in intracellular pH for cell signaling or to regulate biochemical or developmental processes. The polypeptide is Proton channel OtopLc (Drosophila melanogaster (Fruit fly)).